Here is a 592-residue protein sequence, read N- to C-terminus: V-type ATP synthase alpha chain (592 aa).

233–240 (GPFGSGKT) serves as a coordination point for ATP.

Belongs to the ATPase alpha/beta chains family.

The catalysed reaction is ATP + H2O + 4 H(+)(in) = ADP + phosphate + 5 H(+)(out). In terms of biological role, produces ATP from ADP in the presence of a proton gradient across the membrane. The V-type alpha chain is a catalytic subunit. The polypeptide is V-type ATP synthase alpha chain (Clostridium botulinum (strain Loch Maree / Type A3)).